The sequence spans 272 residues: HMP-PP phosphatase (272 aa).

Residue D8 is the Nucleophile of the active site. Residues D8, D10, and D212 each contribute to the Mg(2+) site.

Belongs to the HAD-like hydrolase superfamily. Cof family. It depends on Mg(2+) as a cofactor.

It catalyses the reaction 4-amino-2-methyl-5-(diphosphooxymethyl)pyrimidine + H2O = 4-amino-2-methyl-5-(phosphooxymethyl)pyrimidine + phosphate + H(+). Its function is as follows. Catalyzes the hydrolysis of 4-amino-2-methyl-5-hydroxymethylpyrimidine pyrophosphate (HMP-PP) to 4-amino-2-methyl-5-hydroxymethylpyrimidine phosphate (HMP-P). In Enterobacter sp. (strain 638), this protein is HMP-PP phosphatase.